Here is a 174-residue protein sequence, read N- to C-terminus: Nucleoside diphosphate kinase (174 aa).

ATP is bound by residues Lys-14, Phe-62, Arg-90, Thr-96, and Arg-107. His-123 acts as the Pros-phosphohistidine intermediate in catalysis.

Belongs to the NDK family. Mg(2+) serves as cofactor.

It localises to the cytoplasm. It carries out the reaction a 2'-deoxyribonucleoside 5'-diphosphate + ATP = a 2'-deoxyribonucleoside 5'-triphosphate + ADP. The enzyme catalyses a ribonucleoside 5'-diphosphate + ATP = a ribonucleoside 5'-triphosphate + ADP. Functionally, major role in the synthesis of nucleoside triphosphates other than ATP. The ATP gamma phosphate is transferred to the NDP beta phosphate via a ping-pong mechanism, using a phosphorylated active-site intermediate. The sequence is that of Nucleoside diphosphate kinase from Thermococcus kodakarensis (strain ATCC BAA-918 / JCM 12380 / KOD1) (Pyrococcus kodakaraensis (strain KOD1)).